We begin with the raw amino-acid sequence, 208 residues long: UPF0319 protein VSAL_I2129 (208 aa).

An N-terminal signal peptide occupies residues 1–21 (MKFHSFLAAGLCLLTSLSASA).

Belongs to the UPF0319 family.

This is UPF0319 protein VSAL_I2129 from Aliivibrio salmonicida (strain LFI1238) (Vibrio salmonicida (strain LFI1238)).